The following is a 443-amino-acid chain: ATP-dependent protease ATPase subunit HslU (443 aa).

Residues I18, 60–65 (GVGKTE), D256, E321, and R393 each bind ATP.

This sequence belongs to the ClpX chaperone family. HslU subfamily. In terms of assembly, a double ring-shaped homohexamer of HslV is capped on each side by a ring-shaped HslU homohexamer. The assembly of the HslU/HslV complex is dependent on binding of ATP.

Its subcellular location is the cytoplasm. ATPase subunit of a proteasome-like degradation complex; this subunit has chaperone activity. The binding of ATP and its subsequent hydrolysis by HslU are essential for unfolding of protein substrates subsequently hydrolyzed by HslV. HslU recognizes the N-terminal part of its protein substrates and unfolds these before they are guided to HslV for hydrolysis. The chain is ATP-dependent protease ATPase subunit HslU from Escherichia fergusonii (strain ATCC 35469 / DSM 13698 / CCUG 18766 / IAM 14443 / JCM 21226 / LMG 7866 / NBRC 102419 / NCTC 12128 / CDC 0568-73).